Here is a 107-residue protein sequence, read N- to C-terminus: Sperm-specific class P protein 32 (107 aa).

The interval 1–20 (MLTIEPPSATFPASGGSSTH) is disordered. One can recognise an MSP domain in the interval 1 to 107 (MLTIEPPSAT…GDVTILLKTN (107 aa)).

As to expression, expressed at higher level in testis.

The sequence is that of Sperm-specific class P protein 32 (ssp-32) from Caenorhabditis elegans.